We begin with the raw amino-acid sequence, 212 residues long: Peptide methionine sulfoxide reductase MsrA (212 aa).

Residue C52 is part of the active site.

The protein belongs to the MsrA Met sulfoxide reductase family.

It carries out the reaction L-methionyl-[protein] + [thioredoxin]-disulfide + H2O = L-methionyl-(S)-S-oxide-[protein] + [thioredoxin]-dithiol. The enzyme catalyses [thioredoxin]-disulfide + L-methionine + H2O = L-methionine (S)-S-oxide + [thioredoxin]-dithiol. Its function is as follows. Has an important function as a repair enzyme for proteins that have been inactivated by oxidation. Catalyzes the reversible oxidation-reduction of methionine sulfoxide in proteins to methionine. The chain is Peptide methionine sulfoxide reductase MsrA from Escherichia coli (strain SMS-3-5 / SECEC).